The primary structure comprises 638 residues: 1-deoxy-D-xylulose-5-phosphate synthase (638 aa).

Thiamine diphosphate is bound by residues H78 and 119-121 (AHS). Residue D150 participates in Mg(2+) binding. Residues 151-152 (GS), N179, Y288, and E370 contribute to the thiamine diphosphate site. Residue N179 coordinates Mg(2+).

It belongs to the transketolase family. DXPS subfamily. In terms of assembly, homodimer. Mg(2+) serves as cofactor. Requires thiamine diphosphate as cofactor.

The enzyme catalyses D-glyceraldehyde 3-phosphate + pyruvate + H(+) = 1-deoxy-D-xylulose 5-phosphate + CO2. The protein operates within metabolic intermediate biosynthesis; 1-deoxy-D-xylulose 5-phosphate biosynthesis; 1-deoxy-D-xylulose 5-phosphate from D-glyceraldehyde 3-phosphate and pyruvate: step 1/1. In terms of biological role, catalyzes the acyloin condensation reaction between C atoms 2 and 3 of pyruvate and glyceraldehyde 3-phosphate to yield 1-deoxy-D-xylulose-5-phosphate (DXP). The polypeptide is 1-deoxy-D-xylulose-5-phosphate synthase (Brucella anthropi (strain ATCC 49188 / DSM 6882 / CCUG 24695 / JCM 21032 / LMG 3331 / NBRC 15819 / NCTC 12168 / Alc 37) (Ochrobactrum anthropi)).